A 631-amino-acid polypeptide reads, in one-letter code: Phosphomethylpyrimidine synthase (631 aa).

Substrate contacts are provided by residues N239, M268, Y297, H333, 353–355 (SRG), 394–397 (DGLR), and E433. H437 serves as a coordination point for Zn(2+). Substrate is bound at residue Y460. H501 is a binding site for Zn(2+). [4Fe-4S] cluster is bound by residues C581, C584, and C589.

The protein belongs to the ThiC family. As to quaternary structure, homodimer. [4Fe-4S] cluster is required as a cofactor.

The enzyme catalyses 5-amino-1-(5-phospho-beta-D-ribosyl)imidazole + S-adenosyl-L-methionine = 4-amino-2-methyl-5-(phosphooxymethyl)pyrimidine + CO + 5'-deoxyadenosine + formate + L-methionine + 3 H(+). The protein operates within cofactor biosynthesis; thiamine diphosphate biosynthesis. Its function is as follows. Catalyzes the synthesis of the hydroxymethylpyrimidine phosphate (HMP-P) moiety of thiamine from aminoimidazole ribotide (AIR) in a radical S-adenosyl-L-methionine (SAM)-dependent reaction. This chain is Phosphomethylpyrimidine synthase, found in Escherichia coli O7:K1 (strain IAI39 / ExPEC).